The following is a 335-amino-acid chain: Transmembrane protein 120B (335 aa).

Residues 1–39 (MSLQKCQEEWGELEKEFQQLQETHKVYKQKLEELNGLQN) are a coiled coil. 6 helical membrane-spanning segments follow: residues 100-122 (GLYL…AKFA), 130-150 (FKLY…FVLH), 157-177 (VFNF…SILI), 193-213 (VSTF…YQIF), 268-288 (FLLP…ITLF), and 300-320 (QVFV…LTTL).

It belongs to the TMEM120 family.

The protein resides in the nucleus inner membrane. Functionally, necessary for efficient adipogenesis. Does not show ion channel activity. The polypeptide is Transmembrane protein 120B (tmem120b) (Xenopus tropicalis (Western clawed frog)).